We begin with the raw amino-acid sequence, 314 residues long: Trimethylamine N-oxide-binding protein (314 aa).

The first 24 residues, 1–24, serve as a signal peptide directing secretion; sequence MKKIVSLMSALVISVVSFAGISNA. Trimethylamine N-oxide-binding residues include Trp38, Trp85, Glu114, Trp164, and Trp212.

The complex is probably composed of two ATP-binding proteins (TmoW), two transmembrane proteins (TmoV) and a solute-binding protein (TmoX).

It is found in the periplasm. Part of the ABC transporter complex TmoXWV involved in trimethylamine N-oxide (TMAO) import. Possesses a high binding affinity toward TMAO, but presents little binding affinity toward betaine, carnitine, trimethylamine (TMA) or dimethylamine (DMA). This Pelagibacter ubique (strain HTCC1062) protein is Trimethylamine N-oxide-binding protein.